The following is a 235-amino-acid chain: Thiamine import ATP-binding protein ThiQ (235 aa).

In terms of domain architecture, ABC transporter spans 2–230; that stretch reads LKLIDITWLY…QASASALLGI (229 aa). 32–39 provides a ligand contact to ATP; that stretch reads GPSGAGKS.

Belongs to the ABC transporter superfamily. Thiamine importer (TC 3.A.1.19.1) family. The complex is composed of two ATP-binding proteins (ThiQ), two transmembrane proteins (ThiP) and a solute-binding protein (ThiB).

It localises to the cell inner membrane. The catalysed reaction is thiamine(out) + ATP + H2O = thiamine(in) + ADP + phosphate + H(+). Its function is as follows. Part of the ABC transporter complex ThiBPQ involved in thiamine import. Responsible for energy coupling to the transport system. The sequence is that of Thiamine import ATP-binding protein ThiQ from Salmonella paratyphi A (strain ATCC 9150 / SARB42).